The following is a 480-amino-acid chain: Islet cell autoantigen 1 (480 aa).

Positions 50-253 (ASDADLDAKL…TSHTMAAIHE (204 aa)) constitute an AH domain. Composition is skewed to basic and acidic residues over residues 276 to 293 (LVEK…REAV) and 306 to 321 (ENQH…EEGK). Disordered stretches follow at residues 276–338 (LVEK…ACSG) and 400–421 (LKEP…IGSA).

It is found in the cytoplasm. The protein localises to the cytosol. It localises to the golgi apparatus membrane. Its subcellular location is the cytoplasmic vesicle. The protein resides in the secretory vesicle membrane. It is found in the secretory vesicle. The protein localises to the synaptic vesicle membrane. In terms of biological role, may play a role in neurotransmitter secretion. The polypeptide is Islet cell autoantigen 1 (Rattus norvegicus (Rat)).